Here is a 370-residue protein sequence, read N- to C-terminus: Gametogenetin-binding protein 1 (370 aa).

Disordered regions lie at residues 26 to 114 and 240 to 263; these read VGSK…QTLT and PAAP…EEAV. The span at 31 to 49 shows a compositional bias: polar residues; sequence GSKSTNKPLTRSQPSSSWE. Residues 225-370 are required for induction of mitochondrial fragmentation; sequence LYKQLQKSAM…DEMGNWPPPD (146 aa). Residues 250 to 260 are compositionally biased toward basic and acidic residues; it reads GLPHEEKGERE. The interval 298-370 is interaction with GGN; that stretch reads KKFRSTDTVG…DEMGNWPPPD (73 aa).

Interacts with CCDC159. Interacts with isoform 1 and isoform 2 of GGN. In terms of tissue distribution, testis-specific. In the testis, expressed only in germ cells and not in somatic cells. Expression starts in late primary spermatocytes in stage X-XII tubules and gradually increases towards step 1-3 spermatids in stage I-III tubules. Expression then declines continuously and disappears after step 7 spermatids in stage VII tubules (at protein level).

It is found in the cytoplasm. Its subcellular location is the membrane. The protein resides in the golgi apparatus. The protein localises to the mitochondrion intermembrane space. Functionally, induces mitochondrial fragmentation, possibly by promoting DNM1L-dependent fission and may play a role in mitochondrial morphogenesis during spermatogenesis. The chain is Gametogenetin-binding protein 1 (Ggnbp1) from Mus musculus (Mouse).